Consider the following 201-residue polypeptide: Probable DNA replication complex GINS protein PSF1 (201 aa).

Belongs to the GINS1/PSF1 family. As to quaternary structure, component of the GINS complex which is a heterotetramer of gins1, gins2, gins3 and gins4.

The protein resides in the nucleus. Functionally, the GINS complex plays an essential role in the initiation of DNA replication. The polypeptide is Probable DNA replication complex GINS protein PSF1 (Caenorhabditis briggsae).